Reading from the N-terminus, the 424-residue chain is O-methyltransferase aunD (424 aa).

An S-adenosyl-L-methionine-binding site is contributed by Asp275. His326 (proton acceptor) is an active-site residue.

This sequence belongs to the class I-like SAM-binding methyltransferase superfamily. Cation-independent O-methyltransferase family.

The protein operates within secondary metabolite biosynthesis. Functionally, O-methyltransferase; part of the gene cluster that mediates the biosynthesis of aurasperone B, a dimeric gamma-naphthopyrone. The first step in the biosynthesis of aurasperone B is the production of gamma-naphthopyrone precursor YWA1 by the non-reducing polyketide synthase albA, via condensation of one acetyl-CoA starter unit with 6 malonyl-CoA units. YWA1 is then methylated by aunE at position C-6 to yield foncesin which is further methylated at position C-8 by aunD to produce fonsecin B. A key enzyme in the biosynthetic pathway is the cytochrome P450 monooxygenase aunB which catalyzes the oxidative dimerization of fonsecin B to aurasperone B. AunB also catalyzes the oxidative dimerization of rubrofusarin B into aurasperone A. The protein is O-methyltransferase aunD of Aspergillus niger (strain ATCC 1015 / CBS 113.46 / FGSC A1144 / LSHB Ac4 / NCTC 3858a / NRRL 328 / USDA 3528.7).